A 371-amino-acid chain; its full sequence is Macronuclear solute carrier homolog CR-MSC (371 aa).

3 Solcar repeats span residues 16–111 (RMNY…FYDK), 120–208 (ARPD…CKEN), and 215–304 (PHWI…LSQF). The next 6 membrane-spanning stretches (helical) occupy residues 22-42 (FAAA…LDMV), 89-109 (TFFF…GYFY), 126-146 (VAAG…IDIV), 184-204 (AGAN…IYDW), 221-241 (LWGT…FDMI), and 281-301 (FGSF…ICYL).

It belongs to the mitochondrial carrier (TC 2.A.29) family.

The protein resides in the membrane. This is Macronuclear solute carrier homolog CR-MSC from Oxytricha trifallax (Sterkiella histriomuscorum).